We begin with the raw amino-acid sequence, 350 residues long: Flap endonuclease 1 (350 aa).

An N-domain region spans residues 1–102; sequence MGVNLKDLIP…KEIEKRRKIR (102 aa). 7 residues coordinate Mg(2+): aspartate 31, aspartate 84, glutamate 156, glutamate 158, aspartate 177, aspartate 179, and aspartate 240. Positions 120-262 are I-domain; sequence AARRYAMMSA…KALQLVKAYK (143 aa). Positions 341–349 are interaction with PCNA; sequence KQLGLEAWF.

Belongs to the XPG/RAD2 endonuclease family. FEN1 subfamily. Interacts with PCNA. PCNA stimulates the nuclease activity without altering cleavage specificity. The cofactor is Mg(2+).

Its function is as follows. Structure-specific nuclease with 5'-flap endonuclease and 5'-3' exonuclease activities involved in DNA replication and repair. During DNA replication, cleaves the 5'-overhanging flap structure that is generated by displacement synthesis when DNA polymerase encounters the 5'-end of a downstream Okazaki fragment. Binds the unpaired 3'-DNA end and kinks the DNA to facilitate 5' cleavage specificity. Cleaves one nucleotide into the double-stranded DNA from the junction in flap DNA, leaving a nick for ligation. Also involved in the base excision repair (BER) pathway. Acts as a genome stabilization factor that prevents flaps from equilibrating into structures that lead to duplications and deletions. Also possesses 5'-3' exonuclease activity on nicked or gapped double-stranded DNA. The chain is Flap endonuclease 1 from Staphylothermus marinus (strain ATCC 43588 / DSM 3639 / JCM 9404 / F1).